A 281-amino-acid chain; its full sequence is ATP phosphoribosyltransferase (281 aa).

It belongs to the ATP phosphoribosyltransferase family. Long subfamily. Mg(2+) serves as cofactor.

The protein resides in the cytoplasm. It carries out the reaction 1-(5-phospho-beta-D-ribosyl)-ATP + diphosphate = 5-phospho-alpha-D-ribose 1-diphosphate + ATP. Its pathway is amino-acid biosynthesis; L-histidine biosynthesis; L-histidine from 5-phospho-alpha-D-ribose 1-diphosphate: step 1/9. With respect to regulation, feedback inhibited by histidine. Its function is as follows. Catalyzes the condensation of ATP and 5-phosphoribose 1-diphosphate to form N'-(5'-phosphoribosyl)-ATP (PR-ATP). Has a crucial role in the pathway because the rate of histidine biosynthesis seems to be controlled primarily by regulation of HisG enzymatic activity. This is ATP phosphoribosyltransferase from Natronomonas pharaonis (strain ATCC 35678 / DSM 2160 / CIP 103997 / JCM 8858 / NBRC 14720 / NCIMB 2260 / Gabara) (Halobacterium pharaonis).